Reading from the N-terminus, the 429-residue chain is Enolase (429 aa).

Gln167 contributes to the (2R)-2-phosphoglycerate binding site. Glu209 acts as the Proton donor in catalysis. Mg(2+)-binding residues include Asp246, Glu289, and Asp316. The (2R)-2-phosphoglycerate site is built by Lys341, Arg370, Ser371, and Lys392. The active-site Proton acceptor is Lys341.

It belongs to the enolase family. Component of the RNA degradosome, a multiprotein complex involved in RNA processing and mRNA degradation. Mg(2+) is required as a cofactor.

The protein resides in the cytoplasm. The protein localises to the secreted. It is found in the cell surface. It carries out the reaction (2R)-2-phosphoglycerate = phosphoenolpyruvate + H2O. Its pathway is carbohydrate degradation; glycolysis; pyruvate from D-glyceraldehyde 3-phosphate: step 4/5. In terms of biological role, catalyzes the reversible conversion of 2-phosphoglycerate (2-PG) into phosphoenolpyruvate (PEP). It is essential for the degradation of carbohydrates via glycolysis. This is Enolase from Pseudomonas entomophila (strain L48).